Consider the following 285-residue polypeptide: MKISDVVVELFREAAIYLPEDVKNALEEAYKKESSEISKNTLKAIIENNKIAEETQVPLCQDTGVPIVFLKIGKNINSSEIMKIIEEIKEGVKKATEEVPLRPNVVHPLTRENFKTNVGLNSPFINIEFDESLDREIEIIAFPKGAGSENMSALKMLKPSDGIEGIKNFVLETIANAGGKPCPPIVVGIGIGGTADVALKLAKKALLRKIGERHRDKEIANLEKELLEKINSLGIGAMGLGGDITALDVFIEIAGCHTASLPVGICIQCWADRRAIKRIKLDAKL.

Iron-sulfur cluster is bound by residues C60, C182, and C269.

Belongs to the class-I fumarase family. Tetramer of two alpha and two beta subunits. Iron-sulfur cluster serves as cofactor.

It carries out the reaction (2R,3R)-tartrate = oxaloacetate + H2O. This Methanocaldococcus jannaschii (strain ATCC 43067 / DSM 2661 / JAL-1 / JCM 10045 / NBRC 100440) (Methanococcus jannaschii) protein is Putative L(+)-tartrate dehydratase subunit alpha.